The primary structure comprises 379 residues: Caffeyl-CoA reductase-Etf complex subunit CarC (379 aa).

Residues 122 to 131 (FALTEPGAGS) and 155 to 157 (FIT) contribute to the FAD site. A substrate-binding site is contributed by Ser-131. 239–242 (DVGR) provides a ligand contact to substrate. Residues Arg-267, Gln-278, and 335–339 (QIHGG) each bind FAD. The active-site Proton acceptor is the Glu-362. Gly-363 contributes to the substrate binding site. 364 to 366 (TSQ) contacts FAD.

The protein belongs to the acyl-CoA dehydrogenase family. In terms of assembly, part of the homotrimeric caffeyl-CoA reductase-Etf complex composed of (R)-2-hydroxyisocaproyl-CoA dehydratase CarC, and the electron transfer flavoprotein (ETF) alpha (CarE) and beta (CarD) subunits. Requires FAD as cofactor.

The protein resides in the cytoplasm. The catalysed reaction is hydrocaffeoyl-CoA + 2 reduced [2Fe-2S]-[ferredoxin] + 2 NAD(+) = (E)-caffeoyl-CoA + 2 oxidized [2Fe-2S]-[ferredoxin] + 2 NADH. The Caffeyl-CoA reductase-Etf complex catalyzes the reduction of caffeyl-CoA to yield hydrocaffeyl-CoA. It couples the endergonic ferredoxin reduction with NADH as reductant to the exergonic reduction of caffeoyl-CoA with the same reductant. It uses the mechanism of electron bifurcation to overcome the steep energy barrier in ferredoxin reduction. Also reduces 4-coumaroyl-CoA and feruloyl-CoA. This Acetobacterium woodii (strain ATCC 29683 / DSM 1030 / JCM 2381 / KCTC 1655 / WB1) protein is Caffeyl-CoA reductase-Etf complex subunit CarC.